The sequence spans 369 residues: DNA replication and repair protein RecF (369 aa).

30–37 (GDNAQGKT) lines the ATP pocket.

This sequence belongs to the RecF family.

The protein resides in the cytoplasm. The RecF protein is involved in DNA metabolism; it is required for DNA replication and normal SOS inducibility. RecF binds preferentially to single-stranded, linear DNA. It also seems to bind ATP. The protein is DNA replication and repair protein RecF of Streptococcus equi subsp. zooepidemicus (strain H70).